We begin with the raw amino-acid sequence, 164 residues long: MTDTQVTWLTEESYDRLKAELDQLIANRPVIAAEINDRREEGDLRENGGYHAAREQQGQEEARIRQLQELLNNAKVGEAPKQSGIALPGSVVKVYYDDDEKDTETFLIGTREQGVSDGKLEVYSPNSPLGGALIDAKVGESRSYTVPSGNTVKVTLVSAEPYHG.

Residues 11–76 (EESYDRLKAE…LQELLNNAKV (66 aa)) are a coiled coil.

Belongs to the GreA/GreB family.

Its function is as follows. Necessary for efficient RNA polymerase transcription elongation past template-encoded arresting sites. The arresting sites in DNA have the property of trapping a certain fraction of elongating RNA polymerases that pass through, resulting in locked ternary complexes. Cleavage of the nascent transcript by cleavage factors such as GreA or GreB allows the resumption of elongation from the new 3'terminus. GreA releases sequences of 2 to 3 nucleotides. In Mycolicibacterium vanbaalenii (strain DSM 7251 / JCM 13017 / BCRC 16820 / KCTC 9966 / NRRL B-24157 / PYR-1) (Mycobacterium vanbaalenii), this protein is Transcription elongation factor GreA.